The sequence spans 92 residues: DNA/RNA-binding protein Alba (92 aa).

Residue Lys-11 is modified to N6-acetyllysine.

This sequence belongs to the histone-like Alba family. In terms of processing, acetylated. Acetylation at Lys-11 decreases DNA-binding affinity.

The protein localises to the cytoplasm. The protein resides in the chromosome. Functionally, binds double-stranded DNA tightly but without sequence specificity. Involved in DNA compaction. The sequence is that of DNA/RNA-binding protein Alba from Pyrobaculum aerophilum (strain ATCC 51768 / DSM 7523 / JCM 9630 / CIP 104966 / NBRC 100827 / IM2).